Reading from the N-terminus, the 152-residue chain is Ribosome maturation factor RimP (152 aa).

This sequence belongs to the RimP family.

It localises to the cytoplasm. Its function is as follows. Required for maturation of 30S ribosomal subunits. The protein is Ribosome maturation factor RimP of Stutzerimonas stutzeri (strain A1501) (Pseudomonas stutzeri).